A 444-amino-acid chain; its full sequence is Tol-Pal system protein TolB (444 aa).

The signal sequence occupies residues 1-19; that stretch reads MRNIIYFILSLLFSFKGYA.

Belongs to the TolB family. The Tol-Pal system is composed of five core proteins: the inner membrane proteins TolA, TolQ and TolR, the periplasmic protein TolB and the outer membrane protein Pal. They form a network linking the inner and outer membranes and the peptidoglycan layer.

It localises to the periplasm. Its function is as follows. Part of the Tol-Pal system, which plays a role in outer membrane invagination during cell division and is important for maintaining outer membrane integrity. The chain is Tol-Pal system protein TolB from Rickettsia felis (strain ATCC VR-1525 / URRWXCal2) (Rickettsia azadi).